Here is a 98-residue protein sequence, read N- to C-terminus: Large ribosomal subunit protein bL28 (98 aa).

The protein belongs to the bacterial ribosomal protein bL28 family.

The chain is Large ribosomal subunit protein bL28 from Mesorhizobium japonicum (strain LMG 29417 / CECT 9101 / MAFF 303099) (Mesorhizobium loti (strain MAFF 303099)).